Consider the following 604-residue polypeptide: Glutamine--fructose-6-phosphate aminotransferase [isomerizing] (604 aa).

The Nucleophile; for GATase activity role is filled by C2. Positions 2–218 constitute a Glutamine amidotransferase type-2 domain; the sequence is CGIVGVVGNT…DKELVIVKKD (217 aa). SIS domains follow at residues 284 to 423 and 456 to 594; these read IIKS…ANGK and VEQL…VDKP. Catalysis depends on K599, which acts as the For Fru-6P isomerization activity.

In terms of assembly, homodimer.

It is found in the cytoplasm. The enzyme catalyses D-fructose 6-phosphate + L-glutamine = D-glucosamine 6-phosphate + L-glutamate. Its function is as follows. Catalyzes the first step in hexosamine metabolism, converting fructose-6P into glucosamine-6P using glutamine as a nitrogen source. The protein is Glutamine--fructose-6-phosphate aminotransferase [isomerizing] of Streptococcus agalactiae serotype V (strain ATCC BAA-611 / 2603 V/R).